The following is a 498-amino-acid chain: Cytochrome P450 monooxygenase 110 (498 aa).

The chain crosses the membrane as a helical span at residues 7–24 (YVFALLGILATLYFVRWS). N-linked (GlcNAc...) asparagine glycosylation occurs at asparagine 425. Position 440 (cysteine 440) interacts with heme.

Belongs to the cytochrome P450 family. It depends on heme as a cofactor.

The protein localises to the membrane. It functions in the pathway secondary metabolite biosynthesis. Cytochrome P450 monooxygenase that is able to use dehydroabietic acid and testosterone as substrates for oxidation, suggesting that the natural substrate(s) may be structurally related to steroid compounds. In Postia placenta (strain ATCC 44394 / Madison 698-R) (Brown rot fungus), this protein is Cytochrome P450 monooxygenase 110.